A 547-amino-acid polypeptide reads, in one-letter code: Chaperonin GroEL (547 aa).

ATP-binding positions include 30-33 (TLGP), lysine 51, 87-91 (DGTTT), glycine 415, and aspartate 496. Positions 527–547 (SDKAEPMPMRGGMGGMGGMDF) are disordered. The span at 537–547 (GGMGGMGGMDF) shows a compositional bias: gly residues.

The protein belongs to the chaperonin (HSP60) family. In terms of assembly, forms a cylinder of 14 subunits composed of two heptameric rings stacked back-to-back. Interacts with the co-chaperonin GroES.

Its subcellular location is the cytoplasm. It carries out the reaction ATP + H2O + a folded polypeptide = ADP + phosphate + an unfolded polypeptide.. Functionally, together with its co-chaperonin GroES, plays an essential role in assisting protein folding. The GroEL-GroES system forms a nano-cage that allows encapsulation of the non-native substrate proteins and provides a physical environment optimized to promote and accelerate protein folding. The polypeptide is Chaperonin GroEL (Rickettsia africae (strain ESF-5)).